The chain runs to 149 residues: METAGKAKKGFGGRKGGPRKKSVTRSVKAGLQFPVGRIGRYLKKGRYAQRVGTGAPVYLAAVLEYLAAEVLELAGNAARDNKKTRIIPRHLLLAVRNDEELGKLLAGVTFAHGGVLPNINPVLLPKKTAEKAAKEPKSPSKAGKSPKKA.

A compositionally biased stretch (basic residues) spans 1–23 (METAGKAKKGFGGRKGGPRKKSV). Disordered stretches follow at residues 1–25 (META…SVTR) and 127–149 (KTAE…PKKA). Positions 127–138 (KTAEKAAKEPKS) are enriched in basic and acidic residues. 2 consecutive short sequence motifs (SPKK motif) follow at residues 138–141 (SPSK) and 145–148 (SPKK).

Belongs to the histone H2A family. The nucleosome is a histone octamer containing two molecules each of H2A, H2B, H3 and H4 assembled in one H3-H4 heterotetramer and two H2A-H2B heterodimers. The octamer wraps approximately 147 bp of DNA.

The protein resides in the nucleus. Its subcellular location is the chromosome. Functionally, core component of nucleosome. Nucleosomes wrap and compact DNA into chromatin, limiting DNA accessibility to the cellular machineries which require DNA as a template. Histones thereby play a central role in transcription regulation, DNA repair, DNA replication and chromosomal stability. DNA accessibility is regulated via a complex set of post-translational modifications of histones, also called histone code, and nucleosome remodeling. This Petroselinum crispum (Parsley) protein is Histone H2A.